A 603-amino-acid polypeptide reads, in one-letter code: Nuclear receptor subfamily 2 group C member 1 (603 aa).

The required for interaction with KAT2B stretch occupies residues 1-178; sequence MATIEEIAHQ…RLQRCIAFGM (178 aa). The nuclear receptor DNA-binding region spans 110–185; sequence FDLCVVCGDK…FGMKQDSVQC (76 aa). NR C4-type zinc fingers lie at residues 113–133 and 149–168; these read CVVCGDKASGRHYGAVTCEGC and CRGSKDCIINKHHRNRCQYC. Phosphoserine is present on residues Ser-197 and Ser-215. Thr-220 carries the post-translational modification Phosphothreonine. At Thr-222 the chain carries Phosphothreonine; by MAPK1. Lys-250 participates in a covalent cross-link: Glycyl lysine isopeptide (Lys-Gly) (interchain with G-Cter in SUMO); alternate. A Glycyl lysine isopeptide (Lys-Gly) (interchain with G-Cter in SUMO2); alternate cross-link involves residue Lys-250. Positions 348–590 constitute an NR LBD domain; it reads GSVHLITGDS…SVIPHILKME (243 aa). Ser-581 is modified (phosphoserine; by PKC). The tract at residues 584-603 is required for interaction with NRIP1; it reads PHILKMEPADYNSQIIGHSI. Lys-588 is covalently cross-linked (Glycyl lysine isopeptide (Lys-Gly) (interchain with G-Cter in SUMO2)).

The protein belongs to the nuclear hormone receptor family. NR2 subfamily. As to quaternary structure, homodimer. Heterodimer; binds DNA as a heterodimer with NR2C2 required for chromatin remodeling and for binding to promoter regions such as globin DR1 repeats. Interacts with ESR1; the interaction prevents homodimerization of ESR1 and suppresses its transcriptional activity and cell growth. Interacts with NRIP1 (via its LXXLL motifs); the interaction provides corepressor activity. Interacts with HDAC3 (via the DNA-binding domain). Interacts with HDAC4 (via the DNA-binding domain). Interacts with PIAS1; the interaction is required for sumoylation of NR2C1. Interacts with UBE2I; the interaction is required for sumoylation of NR2C1. Interacts with KAT2B; the interaction acts as a corepressor of gene expression. Sumoylation requires both PIAS1 and UBE2I. Sumoylation appears to dissociate NR2C1 from the PML nuclear bodies. Enhances the interaction with NRIP1 but inhibits interaction with KAT2B. In proliferating cells, stimulation by all-trans retinoic acid, activation of MAPK1-mediated phosphorylation and recruitment to PML bodies with subsequent sumoylation, suppresses OCT4 expression. Post-translationally, phosphorylated on several serine and threonine residues. Phosphorylation on Thr-220, stimulated by all-trans retinoic acid (atRA) mediates PML location and sumoylation in proliferating cells which then modulates its association with effector molecules, KAT2B and NRIP1. Phosphorylation on Ser-581 by PKC is important for protein stability and function as activator of RARB.

The protein resides in the nucleus. It is found in the PML body. In terms of biological role, orphan nuclear receptor. Binds the IR7 element in the promoter of its own gene in an autoregulatory negative feedback mechanism. Primarily repressor of a broad range of genes. Binds to hormone response elements (HREs) consisting of two 5'-AGGTCA-3' half site direct repeat consensus sequences. Together with NR2C2, forms the core of the DRED (direct repeat erythroid-definitive) complex that represses embryonic and fetal globin transcription. Also activator of OCT4 gene expression. May be involved in stem cell proliferation and differentiation. Mediator of retinoic acid-regulated preadipocyte proliferation. The protein is Nuclear receptor subfamily 2 group C member 1 (NR2C1) of Macaca fascicularis (Crab-eating macaque).